We begin with the raw amino-acid sequence, 421 residues long: Hemagglutinin-esterase (421 aa).

An N-terminal signal peptide occupies residues 1 to 16; sequence MFLLPRFILVSCIIGS. Residues 7–127 are esterase domain 1; the sequence is FILVSCIIGS…SNDIWMQNKG (121 aa). Topologically, residues 17–392 are virion surface; it reads LGFDNPPTNV…PICVYDPLPL (376 aa). S40 (nucleophile) is an active-site residue. C44 and C65 are oxidised to a cystine. 5 N-linked (GlcNAc...) asparagine; by host glycosylation sites follow: N54, N89, N153, N236, and N301. 3 cysteine pairs are disulfide-bonded: C113-C162, C197-C276, and C205-C249. Positions 128–266 are receptor binding; it reads LFYTQVYKNM…GNYLAISNEL (139 aa). An esterase domain 2 region spans residues 267 to 379; it reads LLTVPTKAIC…RCPTAADINT (113 aa). An intrachain disulfide couples C307 to C312. N-linked (GlcNAc...) asparagine; by host glycosylation occurs at N316. Residues D326 and H329 each act as charge relay system in the active site. Cysteines 347 and 371 form a disulfide. N-linked (GlcNAc...) asparagine; by host glycosylation occurs at N358. The chain crosses the membrane as a helical span at residues 393–413; it reads ILLGILLGVAVIIIVVLLLYF. At 414–421 the chain is on the intravirion side; sequence MVENGTRL. N417 carries an N-linked (GlcNAc...) asparagine; by host glycan.

Belongs to the influenza type C/coronaviruses hemagglutinin-esterase family. As to quaternary structure, homodimer; disulfide-linked. Forms a complex with the M protein in the pre-Golgi. Associates then with S-M complex to form a ternary complex S-M-HE. Post-translationally, N-glycosylated in the host RER.

The protein resides in the virion membrane. The protein localises to the host cell membrane. The catalysed reaction is N-acetyl-9-O-acetylneuraminate + H2O = N-acetylneuraminate + acetate + H(+). It carries out the reaction N-acetyl-4-O-acetylneuraminate + H2O = N-acetylneuraminate + acetate + H(+). Its function is as follows. Structural protein that makes short spikes at the surface of the virus. Contains receptor binding and receptor-destroying activities. Mediates de-O-acetylation of N-acetyl-4-O-acetylneuraminic acid, which is probably the receptor determinant recognized by the virus on the surface of erythrocytes and susceptible cells. This receptor-destroying activity is important for virus release as it probably helps preventing self-aggregation and ensures the efficient spread of the progeny virus from cell to cell. May serve as a secondary viral attachment protein for initiating infection, the spike protein being the major one. May become a target for both the humoral and the cellular branches of the immune system. The chain is Hemagglutinin-esterase from Bos taurus (Bovine).